Consider the following 62-residue polypeptide: Large ribosomal subunit protein bL28 (62 aa).

A disordered region spans residues 1–24 (MARKCVITGRKTKAGNNRSHAMNS). The segment covering 14–24 (AGNNRSHAMNS) has biased composition (polar residues).

It belongs to the bacterial ribosomal protein bL28 family.

The polypeptide is Large ribosomal subunit protein bL28 (Bacillus pumilus (strain SAFR-032)).